The chain runs to 146 residues: uncharacterized protein (146 aa).

The segment covering 119–128 (AQADLEHEES) has biased composition (basic and acidic residues). The disordered stretch occupies residues 119 to 146 (AQADLEHEESASIDQDEMVAIETRKTKK).

This is an uncharacterized protein from Schizosaccharomyces pombe (strain 972 / ATCC 24843) (Fission yeast).